Here is an 87-residue protein sequence, read N- to C-terminus: Xibalbin-2 (87 aa).

The N-terminal stretch at 1-25 (MKGVCTRKVLYFFMAVILFVAIVAS) is a signal peptide. A propeptide spanning residues 26–45 (EDTENRNPAMAMPLQRMEQE) is cleaved from the precursor.

Belongs to the xibalbin-2 family. In terms of processing, contains 5 disulfide bonds. Expressed by the venom gland. Not found in the whole body.

It localises to the secreted. Probable neurotoxin. Moderately inhibits voltage-gated potassium channels (Kv1.1/KCNA1, Kv1.2/KCNA2, Kv1.3/KCNA3, and Kv1.6/KCNA6, with the highest toxicity against Kv1.6 (73.2% inhibition at 1 uM)) and weakly inhibits sodium channels (Nav1.4/SCN4A). Does not activate protein kinase A type II (PKA-II) and MAP kinase Erk1/2 in sensory neurons. Does not show cytotoxic activity. Does not have an impact on Ca2+, cAMP, and NO signaling in the cell types analyzed. Does not interfere with the adhesion of leukocytes to endothelial cells. In terms of biological role, moderately inhibits voltage-gated potassium channels (Kv1.1/KCNA1, Kv1.2/KCNA2, Kv1.3/KCNA3, and Kv1.6/KCNA6, with the highest toxicity against Kv1.6 (75.9% inhibition at 1 uM)). Does not activate protein kinase A type II (PKA-II) and MAP kinase Erk1/2 in sensory neurons. Does not show cytotoxic activity. Does not have an impact on Ca2+, cAMP, and NO signaling in the cell types analyzed. Does not interfere with the adhesion of leukocytes to endothelial cells. The polypeptide is Xibalbin-2 (Xibalbanus tulumensis (Blind cave remipede)).